A 1056-amino-acid polypeptide reads, in one-letter code: Carbamoyl phosphate synthase large chain (1056 aa).

The tract at residues 1-401 is carboxyphosphate synthetic domain; it reads MPKRTDIHKI…ALHKAVRSLE (401 aa). Residues Arg-129, Arg-169, Gly-175, Gly-176, Lys-208, Ile-210, Glu-215, Gly-241, Ile-242, His-243, Gln-284, and Glu-298 each contribute to the ATP site. The 195-residue stretch at 133 to 327 folds into the ATP-grasp 1 domain; sequence KELMNELGEP…IAKMAAKIAV (195 aa). Mg(2+)-binding residues include Gln-284, Glu-298, and Asn-300. 3 residues coordinate Mn(2+): Gln-284, Glu-298, and Asn-300. Residues 402–546 are oligomerization domain; that stretch reads IDEKDLFSAE…YSAYDHENES (145 aa). Positions 547–929 are carbamoyl phosphate synthetic domain; the sequence is QRTKKPSILV…ALHKAFSGAH (383 aa). The 191-residue stretch at 671-861 folds into the ATP-grasp 2 domain; the sequence is DQVITDLNLK…MAQVATRVIL (191 aa). ATP contacts are provided by Arg-707, Ala-746, Leu-748, Glu-752, Gly-777, Val-778, His-779, Ser-780, Gln-820, and Glu-832. The Mg(2+) site is built by Gln-820, Glu-832, and Asn-834. Residues Gln-820, Glu-832, and Asn-834 each contribute to the Mn(2+) site. One can recognise an MGS-like domain in the interval 930-1056; the sequence is IQVPNDGKIL…DQSLEAITIK (127 aa). The interval 930 to 1056 is allosteric domain; it reads IQVPNDGKIL…DQSLEAITIK (127 aa).

It belongs to the CarB family. Composed of two chains; the small (or glutamine) chain promotes the hydrolysis of glutamine to ammonia, which is used by the large (or ammonia) chain to synthesize carbamoyl phosphate. Tetramer of heterodimers (alpha,beta)4. The cofactor is Mg(2+). It depends on Mn(2+) as a cofactor.

The catalysed reaction is hydrogencarbonate + L-glutamine + 2 ATP + H2O = carbamoyl phosphate + L-glutamate + 2 ADP + phosphate + 2 H(+). The enzyme catalyses hydrogencarbonate + NH4(+) + 2 ATP = carbamoyl phosphate + 2 ADP + phosphate + 2 H(+). The protein operates within amino-acid biosynthesis; L-arginine biosynthesis; carbamoyl phosphate from bicarbonate: step 1/1. Its pathway is pyrimidine metabolism; UMP biosynthesis via de novo pathway; (S)-dihydroorotate from bicarbonate: step 1/3. Functionally, large subunit of the glutamine-dependent carbamoyl phosphate synthetase (CPSase). CPSase catalyzes the formation of carbamoyl phosphate from the ammonia moiety of glutamine, carbonate, and phosphate donated by ATP, constituting the first step of 2 biosynthetic pathways, one leading to arginine and/or urea and the other to pyrimidine nucleotides. The large subunit (synthetase) binds the substrates ammonia (free or transferred from glutamine from the small subunit), hydrogencarbonate and ATP and carries out an ATP-coupled ligase reaction, activating hydrogencarbonate by forming carboxy phosphate which reacts with ammonia to form carbamoyl phosphate. The polypeptide is Carbamoyl phosphate synthase large chain (Limosilactobacillus reuteri (strain DSM 20016) (Lactobacillus reuteri)).